Consider the following 141-residue polypeptide: Large ribosomal subunit protein uL11 (141 aa).

Belongs to the universal ribosomal protein uL11 family. In terms of assembly, part of the ribosomal stalk of the 50S ribosomal subunit. Interacts with L10 and the large rRNA to form the base of the stalk. L10 forms an elongated spine to which 2 L12 dimers bind in a sequential fashion forming a pentameric L10(L12)2(L12)2 complex. In stalled/isolated 50S subunits interacts with RqcH. In terms of processing, one or more lysine residues are methylated.

Forms part of the ribosomal stalk which helps the ribosome interact with GTP-bound translation factors. Required to recruit RqcH, which is part of the ribosome quality control system (RQC), to stalled 50S ribosomal subunits. The sequence is that of Large ribosomal subunit protein uL11 from Bacillus subtilis (strain 168).